The sequence spans 638 residues: Meiosis initiator protein (638 aa).

Disordered regions lie at residues 1–21 (MFGS…SLGP), 60–79 (NQRN…KNHT), 138–249 (LAGL…KGGQ), 404–433 (PSAY…SLHR), and 447–537 (GNSK…PCPP). Polar residues predominate over residues 7–20 (YLGSSEQPRANSLG). The basic motif; degenerate stretch occupies residues 62 to 75 (RNQNKLLSPNKKQR). A bHLH domain is found at 62–116 (RNQNKLLSPNKKQRKNHTSKLQELALLLPIALKTGTKKLTKKEILVHVLQYIQYL). The interval 76–116 (KNHTSKLQELALLLPIALKTGTKKLTKKEILVHVLQYIQYL) is helix-loop-helix motif. Low complexity predominate over residues 157–167 (TPSSSPSSQKS). Positions 182 to 191 (TQASESQTRT) are enriched in polar residues. Over residues 412–430 (PQEKDTASKAPKDPPESHS) the composition is skewed to basic and acidic residues. The span at 453–465 (SSSSSSSSSSSSS) shows a compositional bias: low complexity. Positions 528–537 (KEKKKGPCPP) are enriched in basic residues. The segment at residues 540-608 (KKKCVNGFIM…QHNRIVKQDG (69 aa)) is a DNA-binding region (HMG box).

Interacts with STRA8.

Its subcellular location is the nucleus. Its function is as follows. Gatekeeper of meiotic initiation in both male and female germ cells. In complex with STRA8, directly activates the transcription of a subset of critical meiotic genes playing a central role in cell-cycle switching from mitosis to meiosis. Temporal expression of MEIOSIN is required for meiotic entry decision. This chain is Meiosis initiator protein, found in Homo sapiens (Human).